We begin with the raw amino-acid sequence, 121 residues long: Secretin (121 aa).

A signal peptide spans Met-1 to Ala-18. Residues Arg-19 to Arg-26 constitute a propeptide that is removed on maturation. Position 54 is a valine amide (Val-54). Ser-58 carries the post-translational modification Phosphoserine. Positions Ser-58–Arg-121 are excised as a propeptide.

This sequence belongs to the glucagon family.

It is found in the secreted. Hormone involved in different processes, such as regulation of the pH of the duodenal content, food intake and water homeostasis. Exerts its biological effects by binding to secretin receptor (SCTR), a G-protein coupled receptor expressed in the basolateral domain of several cells. Acts as a key gastrointestinal hormone by regulating the pH of the duodenal content. Secreted by S cells of the duodenum in the crypts of Lieberkuehn and regulates the pH of the duodenum by (1) inhibiting the secretion of gastric acid from the parietal cells of the stomach and (2) stimulating the production of bicarbonate (NaHCO(3)) from the ductal cells of the pancreas. Production of bicarbonate is essential to neutralize the pH and ensure no damage is done to the small intestine by the gastric acid. In addition to regulating the pH of the duodenal content, plays a central role in diet induced thermogenesis: acts as a non-sympathetic brown fat (BAT) activator mediating prandial thermogenesis, which consequentially induces satiation. Mechanistically, secretin released by the gut after a meal binds to secretin receptor (SCTR) in brown adipocytes, activating brown fat thermogenesis by stimulating lipolysis, which is sensed in the brain and promotes satiation. Also able to stimulate lipolysis in white adipocytes. Also plays an important role in cellular osmoregulation: released into the systemic circulation in response to hyperosmolality and acts at different levels in the hypothalamus, pituitary and kidney to regulate water homeostasis. Also plays a role in the central nervous system, possibly by acting as a neuropeptide hormone: required for hippocampal synaptic function and neural progenitor cells maintenance. The protein is Secretin of Homo sapiens (Human).